The sequence spans 110 residues: Large ribosomal subunit protein uL22 (110 aa).

Belongs to the universal ribosomal protein uL22 family. Part of the 50S ribosomal subunit.

Functionally, this protein binds specifically to 23S rRNA; its binding is stimulated by other ribosomal proteins, e.g. L4, L17, and L20. It is important during the early stages of 50S assembly. It makes multiple contacts with different domains of the 23S rRNA in the assembled 50S subunit and ribosome. In terms of biological role, the globular domain of the protein is located near the polypeptide exit tunnel on the outside of the subunit, while an extended beta-hairpin is found that lines the wall of the exit tunnel in the center of the 70S ribosome. This is Large ribosomal subunit protein uL22 from Verminephrobacter eiseniae (strain EF01-2).